The following is a 164-amino-acid chain: CB1 cannabinoid receptor-interacting protein 1 (164 aa).

The protein belongs to the CNRIP family. In terms of assembly, interacts with the cannabinoid receptor CNR1 (via C-terminus). Does not interact with cannabinoid receptor CNR2.

Its function is as follows. Suppresses cannabinoid receptor CNR1-mediated tonic inhibition of voltage-gated calcium channels. This is CB1 cannabinoid receptor-interacting protein 1 (Cnrip1) from Rattus norvegicus (Rat).